The sequence spans 97 residues: C-C motif chemokine 7 (97 aa).

A signal peptide spans 1-23 (MRISATLLCLLLIAAAFSIQVWA). Q24 carries the pyrrolidone carboxylic acid modification. N29 carries N-linked (GlcNAc...) asparagine glycosylation. Cystine bridges form between C33/C57 and C34/C73.

It belongs to the intercrine beta (chemokine CC) family. Monomer. Interacts with TNFAIP6 (via Link domain).

The protein resides in the secreted. Functionally, chemotactic factor that attracts monocytes and eosinophils, but not neutrophils. Augments monocyte anti-tumor activity. This is C-C motif chemokine 7 (Ccl7) from Mus musculus (Mouse).